We begin with the raw amino-acid sequence, 87 residues long: Small ribosomal subunit protein uS17 (87 aa).

It belongs to the universal ribosomal protein uS17 family. Part of the 30S ribosomal subunit.

In terms of biological role, one of the primary rRNA binding proteins, it binds specifically to the 5'-end of 16S ribosomal RNA. The protein is Small ribosomal subunit protein uS17 of Geobacillus stearothermophilus (Bacillus stearothermophilus).